We begin with the raw amino-acid sequence, 500 residues long: Cysteine--tRNA ligase (500 aa).

A Zn(2+)-binding site is contributed by Cys30. Positions 32-42 (PTVYDYAHIGN) match the 'HIGH' region motif. Zn(2+) is bound by residues Cys224, His263, and Glu267. Residues 296–300 (KMSKS) carry the 'KMSKS' region motif. Lys299 is a binding site for ATP.

The protein belongs to the class-I aminoacyl-tRNA synthetase family. In terms of assembly, monomer. Zn(2+) serves as cofactor.

It localises to the cytoplasm. It carries out the reaction tRNA(Cys) + L-cysteine + ATP = L-cysteinyl-tRNA(Cys) + AMP + diphosphate. The sequence is that of Cysteine--tRNA ligase from Bartonella bacilliformis (strain ATCC 35685 / KC583 / Herrer 020/F12,63).